The chain runs to 460 residues: A-type ATP synthase subunit B (460 aa).

It belongs to the ATPase alpha/beta chains family. In terms of assembly, has multiple subunits with at least A(3), B(3), C, D, E, F, H, I and proteolipid K(x).

The protein resides in the cell membrane. In terms of biological role, component of the A-type ATP synthase that produces ATP from ADP in the presence of a proton gradient across the membrane. The B chain is a regulatory subunit. This is A-type ATP synthase subunit B from Thermofilum pendens (strain DSM 2475 / Hrk 5).